The following is a 1377-amino-acid chain: DNA-directed RNA polymerase subunit beta'' (1377 aa).

Zn(2+) contacts are provided by C224, C294, C301, and C304.

It belongs to the RNA polymerase beta' chain family. RpoC2 subfamily. In terms of assembly, in plastids the minimal PEP RNA polymerase catalytic core is composed of four subunits: alpha, beta, beta', and beta''. When a (nuclear-encoded) sigma factor is associated with the core the holoenzyme is formed, which can initiate transcription. Zn(2+) serves as cofactor.

The protein localises to the plastid. It localises to the chloroplast. It carries out the reaction RNA(n) + a ribonucleoside 5'-triphosphate = RNA(n+1) + diphosphate. DNA-dependent RNA polymerase catalyzes the transcription of DNA into RNA using the four ribonucleoside triphosphates as substrates. The sequence is that of DNA-directed RNA polymerase subunit beta'' from Calycanthus floridus var. glaucus (Eastern sweetshrub).